Here is a 149-residue protein sequence, read N- to C-terminus: Transcriptional repressor NrdR (149 aa).

A zinc finger spans residues 3-34 (CPFCDTEETKVIDSRLVSDGYQVRRRRECGHC). In terms of domain architecture, ATP-cone spans 49–139 (PKIIKTDGTR…VYLSFDDIDQ (91 aa)).

Belongs to the NrdR family. Requires Zn(2+) as cofactor.

Negatively regulates transcription of bacterial ribonucleotide reductase nrd genes and operons by binding to NrdR-boxes. This chain is Transcriptional repressor NrdR, found in Haemophilus influenzae (strain 86-028NP).